The primary structure comprises 478 residues: Ubiquitin carboxyl-terminal hydrolase calypso (478 aa).

Residues 11–239 (GWLELESDPG…IRFNLMAVVP (229 aa)) enclose the UCH catalytic domain. Cys-97 serves as the catalytic Nucleophile. The active-site Proton donor is His-176. The ULD domain occupies 400–428 (NYDEFICTFLSMLAHQGELGDLVSQHLIT). A positively charged C-terminal tail required for binding nucleosomes region spans residues 430–478 (RKPNMGSVQNSGSRGVVRNYNKKTTTNGSSPKTPSSKRRRGRTKYRKRK). Positions 432–442 (PNMGSVQNSGS) are enriched in polar residues. The disordered stretch occupies residues 432–478 (PNMGSVQNSGSRGVVRNYNKKTTTNGSSPKTPSSKRRRGRTKYRKRK). Positions 464–478 (SSKRRRGRTKYRKRK) are enriched in basic residues.

Belongs to the peptidase C12 family. BAP1 subfamily. Catalytic component of the polycomb repressive deubiquitinase (PR-DUB) complex, at least composed of caly/calypso, Asx and sba (MBD5/6 homolog). The PR-DUB complex associates with nucleosomes to mediate deubiquitination of histone H2AK118ub1 substrates; the association requires the positively charged C-terminal tail of caly, probably due to direct binding of DNA. Interacts (via ULD domain) with Asx (via DEUBAD domain); the interaction produces a stable heterodimer with a composite binding site for ubiquitin. Homodimerizes (via coiled-coil hinge-region between the UCH and ULD domains) to mediate assembly of 2 copies of the caly-Asx heterodimer into a bisymmetric tetramer; dimerization enhances PR-DUB association with nucleosomes.

It is found in the nucleus. It catalyses the reaction Thiol-dependent hydrolysis of ester, thioester, amide, peptide and isopeptide bonds formed by the C-terminal Gly of ubiquitin (a 76-residue protein attached to proteins as an intracellular targeting signal).. Its function is as follows. Catalytic component of the polycomb repressive deubiquitinase (PR-DUB) complex, a complex that specifically mediates deubiquitination of histone H2A monoubiquitinated at 'Lys-119' (H2AK118ub1). Mediates bisymmetric organization of the PR-DUB complex and is involved in association with nucleosomes to mediate deubiquitination. Does not deubiquitinate monoubiquitinated histone H2B. Required to maintain the transcriptionally repressive state of homeotic genes throughout development. The PR-DUB complex has weak or no activity toward 'Lys-48'- and 'Lys-63'-linked polyubiquitin chains. Polycomb group (PcG) protein. This is Ubiquitin carboxyl-terminal hydrolase calypso from Aedes aegypti (Yellowfever mosquito).